The following is a 504-amino-acid chain: Maturase K (504 aa).

It belongs to the intron maturase 2 family. MatK subfamily.

It is found in the plastid. It localises to the chloroplast. Usually encoded in the trnK tRNA gene intron. Probably assists in splicing its own and other chloroplast group II introns. The polypeptide is Maturase K (Nepenthes distillatoria (Pitcher plant)).